We begin with the raw amino-acid sequence, 313 residues long: MEFQHKPVLLEETISNLAIKPDGVYIDGTVGGAGHSGEILKRLDESGTLIGLDQDEFAIKTSQEKLVQINSKAKIILVNTNFVNIKEVCQKNNIESVDGILLDLGVSSHQLDEASRGFSYNKDAPLDMRMDRRGELTAKKIVNEYGREEIKRIIRDYGEEKWASRIAEFIVEARKKKEIETTGELVDIIKAAIPSSARRGGPHPAKRTFQALRIAVNNELGILAKTIEDGTELLKPGGRFCIITFHSLEDRIVKDEFNKKVNPCICPKQFPVCTCGRKPEGVLVNRKPIVPKEKELEENPRARSAKLRVLEKI.

S-adenosyl-L-methionine is bound by residues 33–35, aspartate 53, phenylalanine 82, aspartate 103, and glutamine 110; that span reads AGH.

This sequence belongs to the methyltransferase superfamily. RsmH family.

The protein localises to the cytoplasm. The enzyme catalyses cytidine(1402) in 16S rRNA + S-adenosyl-L-methionine = N(4)-methylcytidine(1402) in 16S rRNA + S-adenosyl-L-homocysteine + H(+). Functionally, specifically methylates the N4 position of cytidine in position 1402 (C1402) of 16S rRNA. The sequence is that of Ribosomal RNA small subunit methyltransferase H from Acetivibrio thermocellus (strain ATCC 27405 / DSM 1237 / JCM 9322 / NBRC 103400 / NCIMB 10682 / NRRL B-4536 / VPI 7372) (Clostridium thermocellum).